The chain runs to 84 residues: M-zodatoxin-Lt2b (84 aa).

A signal peptide spans 1–22 (MKYFVIALALAVALVCIAESTA). The propeptide occupies 23-58 (YEVNEELENELDDLDDAAWLAVAEELQGLEDFEESR). The Processing quadruplet motif signature appears at 55–58 (EESR).

In terms of processing, cleavage of the propeptide depends on the processing quadruplet motif (XXXR, with at least one of X being E). Expressed by the venom gland.

The protein resides in the secreted. Its function is as follows. Has antimicrobial activity against both Gram-positive and Gram-negative bacteria, and yeasts. Also has a strong hemolytic activity against rabbit erythrocytes. Causes paralysis, but is not lethal when injected into insect (M.domestica) larvae. This chain is M-zodatoxin-Lt2b, found in Lachesana tarabaevi (Spider).